Reading from the N-terminus, the 143-residue chain is Deoxyuridine 5'-triphosphate nucleotidohydrolase (143 aa).

Residues 62-64 (RSG), N75, and 79-81 (TID) each bind substrate.

This sequence belongs to the dUTPase family. Mg(2+) serves as cofactor.

The catalysed reaction is dUTP + H2O = dUMP + diphosphate + H(+). The protein operates within pyrimidine metabolism; dUMP biosynthesis; dUMP from dCTP (dUTP route): step 2/2. In terms of biological role, this enzyme is involved in nucleotide metabolism: it produces dUMP, the immediate precursor of thymidine nucleotides and it decreases the intracellular concentration of dUTP so that uracil cannot be incorporated into DNA. This Acaryochloris marina (strain MBIC 11017) protein is Deoxyuridine 5'-triphosphate nucleotidohydrolase.